The primary structure comprises 336 residues: Glycerol-3-phosphate dehydrogenase [NAD(P)+] (336 aa).

Ser11, Trp12, Arg32, and Lys109 together coordinate NADPH. 3 residues coordinate sn-glycerol 3-phosphate: Lys109, Gly140, and Ser142. Ala144 contributes to the NADPH binding site. Lys195, Asp248, Ser258, Arg259, and Asn260 together coordinate sn-glycerol 3-phosphate. Lys195 acts as the Proton acceptor in catalysis. An NADPH-binding site is contributed by Arg259. Positions 283 and 285 each coordinate NADPH.

Belongs to the NAD-dependent glycerol-3-phosphate dehydrogenase family.

The protein resides in the cytoplasm. The enzyme catalyses sn-glycerol 3-phosphate + NAD(+) = dihydroxyacetone phosphate + NADH + H(+). It carries out the reaction sn-glycerol 3-phosphate + NADP(+) = dihydroxyacetone phosphate + NADPH + H(+). Its pathway is membrane lipid metabolism; glycerophospholipid metabolism. Functionally, catalyzes the reduction of the glycolytic intermediate dihydroxyacetone phosphate (DHAP) to sn-glycerol 3-phosphate (G3P), the key precursor for phospholipid synthesis. The protein is Glycerol-3-phosphate dehydrogenase [NAD(P)+] of Leuconostoc mesenteroides subsp. mesenteroides (strain ATCC 8293 / DSM 20343 / BCRC 11652 / CCM 1803 / JCM 6124 / NCDO 523 / NBRC 100496 / NCIMB 8023 / NCTC 12954 / NRRL B-1118 / 37Y).